The primary structure comprises 97 residues: Exodeoxyribonuclease 7 small subunit (97 aa).

A disordered region spans residues 1-22 (MAKTASPGDTAAGNGTEPLPDK).

It belongs to the XseB family. In terms of assembly, heterooligomer composed of large and small subunits.

The protein localises to the cytoplasm. The catalysed reaction is Exonucleolytic cleavage in either 5'- to 3'- or 3'- to 5'-direction to yield nucleoside 5'-phosphates.. Bidirectionally degrades single-stranded DNA into large acid-insoluble oligonucleotides, which are then degraded further into small acid-soluble oligonucleotides. The sequence is that of Exodeoxyribonuclease 7 small subunit from Burkholderia vietnamiensis (strain G4 / LMG 22486) (Burkholderia cepacia (strain R1808)).